The chain runs to 543 residues: Chaperonin GroEL 1 (543 aa).

Residues 29–32 (TLGP), 86–90 (DGTTT), Gly413, 479–481 (NAA), and Asp495 contribute to the ATP site. The tract at residues 524-543 (PEPKDAAPAGVGGGGGDFDY) is disordered. Gly residues predominate over residues 533–543 (GVGGGGGDFDY).

Belongs to the chaperonin (HSP60) family. As to quaternary structure, forms a cylinder of 14 subunits composed of two heptameric rings stacked back-to-back. Interacts with the co-chaperonin GroES.

The protein localises to the cytoplasm. It carries out the reaction ATP + H2O + a folded polypeptide = ADP + phosphate + an unfolded polypeptide.. Together with its co-chaperonin GroES, plays an essential role in assisting protein folding. The GroEL-GroES system forms a nano-cage that allows encapsulation of the non-native substrate proteins and provides a physical environment optimized to promote and accelerate protein folding. The protein is Chaperonin GroEL 1 of Anabaena sp. (strain L31).